The primary structure comprises 557 residues: CCR4-NOT transcription complex subunit 6 (557 aa).

4 LRR repeats span residues 52 to 73, 75 to 96, 98 to 120, and 121 to 143; these read HLTALHLSDNSLSRIPSDIAKL, NLVYLDLSSNKIRSLPAELGNM, SLRELHLNNNLLRVLPFELGKLF, and QLQTLGLKGNPLTQDILNLYQEP. A nuclease domain region spans residues 153 to 557; the sequence is LLDNLSGTAK…VNGIHLPGRR (405 aa). Position 240 (glutamate 240) interacts with Mg(2+). The substrate site is built by glutamate 240, glutamate 276, histidine 361, and proline 366. Aspartate 412 is a Mg(2+) binding site. Residue aspartate 412 is the Proton donor/acceptor of the active site. Substrate contacts are provided by asparagine 414, asparagine 481, and phenylalanine 486.

Belongs to the CCR4/nocturin family. Component of the CCR4-NOT complex; distinct complexes seem to exist that differ in the participation of probably mutually exclusive catalytic subunits; the complex contains two deadenylase subunits, CNOT6 or CNOT6L, and CNOT7 or CNOT8. Interacts with CNOT7 and CNOT8. Interacts with UNR. Interacts with ZFP36L1 (via N-terminus). Interacts with ZNF335. The cofactor is Mg(2+).

The protein localises to the cytoplasm. Its subcellular location is the nucleus. It carries out the reaction Exonucleolytic cleavage of poly(A) to 5'-AMP.. Functionally, poly(A) nuclease with 3'-5' RNase activity. Catalytic component of the CCR4-NOT complex which is one of the major cellular mRNA deadenylases and is linked to various cellular processes including bulk mRNA degradation, miRNA-mediated repression, translational repression during translational initiation and general transcription regulation. Additional complex functions may be a consequence of its influence on mRNA expression. Involved in mRNA decay mediated by the major-protein-coding determinant of instability (mCRD) of the FOS gene in the cytoplasm. In the presence of ZNF335, enhances ligand-dependent transcriptional activity of nuclear hormone receptors, including RARA. The increase of ligand-dependent ESR1-mediated transcription is much smaller, if any. Mediates cell proliferation and cell survival and prevents cellular senescence. The polypeptide is CCR4-NOT transcription complex subunit 6 (CNOT6) (Homo sapiens (Human)).